A 508-amino-acid polypeptide reads, in one-letter code: Bifunctional purine biosynthesis protein PurH (508 aa).

Residues 1–145 (MTKRALISVS…KNHQYVTVIV (145 aa)) form the MGS-like domain.

This sequence belongs to the PurH family.

The catalysed reaction is (6R)-10-formyltetrahydrofolate + 5-amino-1-(5-phospho-beta-D-ribosyl)imidazole-4-carboxamide = 5-formamido-1-(5-phospho-D-ribosyl)imidazole-4-carboxamide + (6S)-5,6,7,8-tetrahydrofolate. It catalyses the reaction IMP + H2O = 5-formamido-1-(5-phospho-D-ribosyl)imidazole-4-carboxamide. It participates in purine metabolism; IMP biosynthesis via de novo pathway; 5-formamido-1-(5-phospho-D-ribosyl)imidazole-4-carboxamide from 5-amino-1-(5-phospho-D-ribosyl)imidazole-4-carboxamide (10-formyl THF route): step 1/1. It functions in the pathway purine metabolism; IMP biosynthesis via de novo pathway; IMP from 5-formamido-1-(5-phospho-D-ribosyl)imidazole-4-carboxamide: step 1/1. This Lysinibacillus sphaericus (strain C3-41) protein is Bifunctional purine biosynthesis protein PurH.